A 427-amino-acid chain; its full sequence is Extracellular superoxide dismutase [Cu-Zn] 2 (427 aa).

Residues 1 to 20 form the signal peptide; that stretch reads MNKLIISLLIVLSAISIISA. Topologically, residues 21–406 are extracellular; sequence DYQYGYCKFG…PTETSQPGTS (386 aa). N-linked (GlcNAc...) asparagine glycosylation is found at Asn-38, Asn-57, Asn-81, Asn-190, and Asn-218. The Cu cation site is built by His-257, His-259, and His-275. The Zn(2+) site is built by His-275 and His-283. Asn-288 is a glycosylation site (N-linked (GlcNAc...) asparagine). 2 residues coordinate Zn(2+): His-292 and Asp-295. Position 331 (His-331) interacts with Cu cation. Residue Asn-376 is glycosylated (N-linked (GlcNAc...) asparagine). The interval 381–404 is disordered; that stretch reads GESTIEPSPTPSTTPTPTETSQPG. Over residues 395–404 the composition is skewed to low complexity; it reads PTPTETSQPG. A helical transmembrane segment spans residues 407–426; sequence SYLAPFFVLILSSLISVILI. Residue Leu-427 is a topological domain, cytoplasmic.

The protein belongs to the Cu-Zn superoxide dismutase family. It depends on Cu cation as a cofactor. The cofactor is Zn(2+).

Its subcellular location is the cell membrane. The catalysed reaction is 2 superoxide + 2 H(+) = H2O2 + O2. Protect the extracellular space from toxic effect of reactive oxygen intermediates by converting superoxyde radicals into hydrogen peroxyde and oxygen. This Dictyostelium discoideum (Social amoeba) protein is Extracellular superoxide dismutase [Cu-Zn] 2 (sodB).